Reading from the N-terminus, the 325-residue chain is Ribosomal RNA small subunit methyltransferase H (325 aa).

The disordered stretch occupies residues 1–28 (MTASQPLDQADQDSESSSAGSSAAETEH). Residues 15-24 (ESSSAGSSAA) are compositionally biased toward low complexity. Residues 56–58 (GGH), aspartate 82, tyrosine 110, aspartate 131, and glutamine 138 contribute to the S-adenosyl-L-methionine site. Positions 303–325 (TDEEVQANPRSRSAKLRVAKRVE) are disordered. A compositionally biased stretch (basic residues) spans 314-325 (RSAKLRVAKRVE).

The protein belongs to the methyltransferase superfamily. RsmH family.

The protein resides in the cytoplasm. It carries out the reaction cytidine(1402) in 16S rRNA + S-adenosyl-L-methionine = N(4)-methylcytidine(1402) in 16S rRNA + S-adenosyl-L-homocysteine + H(+). Specifically methylates the N4 position of cytidine in position 1402 (C1402) of 16S rRNA. In Rhodopirellula baltica (strain DSM 10527 / NCIMB 13988 / SH1), this protein is Ribosomal RNA small subunit methyltransferase H.